A 272-amino-acid chain; its full sequence is Formamidopyrimidine-DNA glycosylase (272 aa).

Proline 2 serves as the catalytic Schiff-base intermediate with DNA. The active-site Proton donor is glutamate 3. Lysine 58 functions as the Proton donor; for beta-elimination activity in the catalytic mechanism. Histidine 92, arginine 111, and arginine 153 together coordinate DNA. An FPG-type zinc finger spans residues 238-272; that stretch reads NVYGRGGEPCPVCAKPLTEKPLSQRTTVYCTHCQN. The active-site Proton donor; for delta-elimination activity is the arginine 262.

Belongs to the FPG family. In terms of assembly, monomer. It depends on Zn(2+) as a cofactor.

The catalysed reaction is Hydrolysis of DNA containing ring-opened 7-methylguanine residues, releasing 2,6-diamino-4-hydroxy-5-(N-methyl)formamidopyrimidine.. It catalyses the reaction 2'-deoxyribonucleotide-(2'-deoxyribose 5'-phosphate)-2'-deoxyribonucleotide-DNA = a 3'-end 2'-deoxyribonucleotide-(2,3-dehydro-2,3-deoxyribose 5'-phosphate)-DNA + a 5'-end 5'-phospho-2'-deoxyribonucleoside-DNA + H(+). Its function is as follows. Involved in base excision repair of DNA damaged by oxidation or by mutagenic agents. Acts as a DNA glycosylase that recognizes and removes damaged bases. Has a preference for oxidized purines, such as 7,8-dihydro-8-oxoguanine (8-oxoG). Has AP (apurinic/apyrimidinic) lyase activity and introduces nicks in the DNA strand. Cleaves the DNA backbone by beta-delta elimination to generate a single-strand break at the site of the removed base with both 3'- and 5'-phosphates. The sequence is that of Formamidopyrimidine-DNA glycosylase from Teredinibacter turnerae (strain ATCC 39867 / T7901).